The chain runs to 164 residues: DNA-directed RNA polymerase 19 kDa subunit (164 aa).

The span at 1–35 (MADTDDIIDYESDDLTEYEDDDEEEEDGESLETSD) shows a compositional bias: acidic residues. The segment at 1-39 (MADTDDIIDYESDDLTEYEDDDEEEEDGESLETSDIDPK) is disordered.

Belongs to the poxviridae DNA-directed RNA polymerase 19 kDa subunit family. In terms of assembly, the DNA-dependent RNA polymerase used for intermediate and late genes expression consists of eight subunits Rpo30/OPG66, Rpo7/OPG90, Rpo22/OPG103, Rpo147/OPG105, Rpo18/OPG119, Rpo19/OPG131, Rpo132/OPG151 and Rpo35/OPG156. The same holoenzyme, with the addition of the transcription-specificity factor OPG109, is used for early gene expression.

It localises to the virion. The catalysed reaction is RNA(n) + a ribonucleoside 5'-triphosphate = RNA(n+1) + diphosphate. Functionally, part of the DNA-dependent RNA polymerase which catalyzes the transcription of viral DNA into RNA using the four ribonucleoside triphosphates as substrates. Responsible for the transcription of early, intermediate and late genes. DNA-dependent RNA polymerase associates with the early transcription factor (ETF), itself composed of OPG118 and OPG133, thereby allowing the early genes transcription. Late transcription, and probably also intermediate transcription, require newly synthesized RNA polymerase. The polypeptide is DNA-directed RNA polymerase 19 kDa subunit (OPG131) (Variola virus (isolate Human/India/Ind3/1967) (VARV)).